A 370-amino-acid polypeptide reads, in one-letter code: Tomoregulin-1 (370 aa).

A signal peptide spans 1–36 (MDGLHPASWMLLLGSLAFWSASSLLLFSLALPGARA). Residues 37–320 (SNQLLSECHN…VPSRQKLTHV (284 aa)) lie on the Extracellular side of the membrane. N-linked (GlcNAc...) asparagine glycosylation is present at Asn53. 2 consecutive Kazal-like domains span residues 88–135 (ICQF…PCFS) and 179–227 (VCNI…SCIE). 9 cysteine pairs are disulfide-bonded: Cys89/Cys119, Cys93/Cys112, Cys101/Cys133, Cys180/Cys211, Cys184/Cys204, Cys193/Cys225, Cys265/Cys278, Cys273/Cys289, and Cys291/Cys300. Positions 261 to 301 (NYIPCSENYNGYCVHGKCELSYSSQKASCRCDSGYTGQYCD) constitute an EGF-like domain. A helical membrane pass occupies residues 321-341 (LIAAIIGAVQIAIIVAIVMCI). Residues 342–370 (TRKCPKNNRGRRQKQNLGHFSSDTSSRMV) lie on the Cytoplasmic side of the membrane. Residues 349-370 (NRGRRQKQNLGHFSSDTSSRMV) are disordered. The span at 356–370 (QNLGHFSSDTSSRMV) shows a compositional bias: polar residues.

This sequence belongs to the tomoregulin family. In terms of assembly, interacts with cripto. In terms of tissue distribution, expressed at highest levels in brain, and at lower levels in neuroendocrine tissues. Present in neurons from the diencephalon (at protein level).

The protein resides in the cell membrane. In terms of biological role, inhibits nodal/nr-1 and bmp signaling during neural patterning through interaction with cripto. This Xenopus laevis (African clawed frog) protein is Tomoregulin-1 (tmeff1).